The chain runs to 322 residues: Protein-methionine-sulfoxide reductase catalytic subunit MsrP (322 aa).

A signal peptide (tat-type signal) is located at residues 1-59 (MSLRDALKTPSSEITDEAVYRDRRRLLQLFALTPALSVAGCAEADPPPPPKTVVTPAQA). Residues asparagine 79, 82–83 (YE), cysteine 137, threonine 172, asparagine 220, arginine 225, and 236–238 (SIK) each bind Mo-molybdopterin.

It belongs to the MsrP family. In terms of assembly, heterodimer of a catalytic subunit (MsrP) and a heme-binding subunit (MsrQ). Mo-molybdopterin is required as a cofactor. Post-translationally, predicted to be exported by the Tat system. The position of the signal peptide cleavage has not been experimentally proven.

Its subcellular location is the periplasm. The enzyme catalyses L-methionyl-[protein] + a quinone + H2O = L-methionyl-(S)-S-oxide-[protein] + a quinol. It catalyses the reaction L-methionyl-[protein] + a quinone + H2O = L-methionyl-(R)-S-oxide-[protein] + a quinol. Functionally, part of the MsrPQ system that repairs oxidized periplasmic proteins containing methionine sulfoxide residues (Met-O), using respiratory chain electrons. Thus protects these proteins from oxidative-stress damage caused by reactive species of oxygen and chlorine generated by the host defense mechanisms. MsrPQ is essential for the maintenance of envelope integrity under bleach stress, rescuing a wide series of structurally unrelated periplasmic proteins from methionine oxidation. The catalytic subunit MsrP is non-stereospecific, being able to reduce both (R-) and (S-) diastereoisomers of methionine sulfoxide. The protein is Protein-methionine-sulfoxide reductase catalytic subunit MsrP of Xanthomonas campestris pv. campestris (strain ATCC 33913 / DSM 3586 / NCPPB 528 / LMG 568 / P 25).